The chain runs to 307 residues: Glycine--tRNA ligase alpha subunit (307 aa).

Belongs to the class-II aminoacyl-tRNA synthetase family. As to quaternary structure, tetramer of two alpha and two beta subunits.

The protein localises to the cytoplasm. The catalysed reaction is tRNA(Gly) + glycine + ATP = glycyl-tRNA(Gly) + AMP + diphosphate. This is Glycine--tRNA ligase alpha subunit from Levilactobacillus brevis (strain ATCC 367 / BCRC 12310 / CIP 105137 / JCM 1170 / LMG 11437 / NCIMB 947 / NCTC 947) (Lactobacillus brevis).